A 186-amino-acid chain; its full sequence is Mitoferrin-2A (186 aa).

A Solcar repeat occupies 75-163; sequence SNVTTHMLAG…FACYEKLKKT (89 aa). Transmembrane regions (helical) follow at residues 77–96, 137–157, and 172–185; these read VTTH…CLMY, RGLN…FACY, and GNSH…YSCP.

Belongs to the mitochondrial carrier (TC 2.A.29) family.

The protein resides in the mitochondrion inner membrane. The enzyme catalyses Fe(2+)(in) = Fe(2+)(out). Functionally, mitochondrial iron transporter that mediates iron uptake. Probably required for heme synthesis of hemoproteins and Fe-S cluster assembly in non-erythroid cells. In Xenopus laevis (African clawed frog), this protein is Mitoferrin-2A (slc25a28-a).